The chain runs to 460 residues: Nitrilase and fragile histidine triad fusion protein NitFhit (460 aa).

The CN hydrolase domain maps to 33–279 (ATIAVGQMRS…LDIGTAEVDL (247 aa)). Residues Glu72, Lys142, and Cys183 contribute to the active site. The HIT domain maps to 315 to 422 (DRPFATNIVD…MPRRLGDFGH (108 aa)). The Histidine triad motif signature appears at 407–411 (HVHFH). The Tele-AMP-histidine intermediate role is filled by His409.

In the N-terminal section; belongs to the UPF0012 family. Homotetramer. The cofactor is Mn(2+).

It carries out the reaction P(1),P(3)-bis(5'-adenosyl) triphosphate + H2O = AMP + ADP + 2 H(+). Cleaves A-5'-PPP-5'A to yield AMP and ADP. This Drosophila melanogaster (Fruit fly) protein is Nitrilase and fragile histidine triad fusion protein NitFhit.